We begin with the raw amino-acid sequence, 203 residues long: Recombination protein RecR (203 aa).

The C4-type zinc-finger motif lies at 56 to 71; it reads CAVCGNVSDDERCRIC. In terms of domain architecture, Toprim spans 79–179; the sequence is SVVCVVEEPK…TVTRIASGLP (101 aa).

The protein belongs to the RecR family.

May play a role in DNA repair. It seems to be involved in an RecBC-independent recombinational process of DNA repair. It may act with RecF and RecO. The protein is Recombination protein RecR of Mycobacterium avium (strain 104).